Reading from the N-terminus, the 89-residue chain is Phosphocarrier protein HPr (89 aa).

Positions 1–88 constitute an HPr domain; the sequence is MLEHELTVTN…ELFENRFNED (88 aa). The active-site Pros-phosphohistidine intermediate is the His-15. A Phosphoserine; by HPrK/P modification is found at Ser-46.

It belongs to the HPr family.

The protein resides in the cytoplasm. With respect to regulation, phosphorylation on Ser-46 inhibits the phosphoryl transfer from enzyme I to HPr. General (non sugar-specific) component of the phosphoenolpyruvate-dependent sugar phosphotransferase system (sugar PTS). This major carbohydrate active-transport system catalyzes the phosphorylation of incoming sugar substrates concomitantly with their translocation across the cell membrane. The phosphoryl group from phosphoenolpyruvate (PEP) is transferred to the phosphoryl carrier protein HPr by enzyme I. Phospho-HPr then transfers it to the PTS EIIA domain. The chain is Phosphocarrier protein HPr (ptsH) from Xylella fastidiosa (strain Temecula1 / ATCC 700964).